The chain runs to 498 residues: ATP synthase subunit beta, chloroplastic (498 aa).

172–179 (GGAGVGKT) contacts ATP.

The protein belongs to the ATPase alpha/beta chains family. As to quaternary structure, F-type ATPases have 2 components, CF(1) - the catalytic core - and CF(0) - the membrane proton channel. CF(1) has five subunits: alpha(3), beta(3), gamma(1), delta(1), epsilon(1). CF(0) has four main subunits: a(1), b(1), b'(1) and c(9-12).

The protein resides in the plastid. It is found in the chloroplast thylakoid membrane. It carries out the reaction ATP + H2O + 4 H(+)(in) = ADP + phosphate + 5 H(+)(out). Functionally, produces ATP from ADP in the presence of a proton gradient across the membrane. The catalytic sites are hosted primarily by the beta subunits. In Liriodendron tulipifera (Tuliptree), this protein is ATP synthase subunit beta, chloroplastic.